The sequence spans 313 residues: Ribonuclease Z (313 aa).

The Zn(2+) site is built by histidine 62, histidine 64, aspartate 66, histidine 67, histidine 142, aspartate 212, and histidine 270. Aspartate 66 serves as the catalytic Proton acceptor.

Belongs to the RNase Z family. As to quaternary structure, homodimer. Zn(2+) serves as cofactor.

It carries out the reaction Endonucleolytic cleavage of RNA, removing extra 3' nucleotides from tRNA precursor, generating 3' termini of tRNAs. A 3'-hydroxy group is left at the tRNA terminus and a 5'-phosphoryl group is left at the trailer molecule.. Functionally, zinc phosphodiesterase, which displays some tRNA 3'-processing endonuclease activity. Probably involved in tRNA maturation, by removing a 3'-trailer from precursor tRNA. This is Ribonuclease Z from Cytophaga hutchinsonii (strain ATCC 33406 / DSM 1761 / CIP 103989 / NBRC 15051 / NCIMB 9469 / D465).